The primary structure comprises 611 residues: Mitochondrial distribution and morphology protein 34 (611 aa).

The SMP-LTD domain occupies 1–195 (MAFNFNWSPL…LPAIIHRLSL (195 aa)). The segment covering 325 to 342 (SAPLSSQDTASVASSQSR) has biased composition (polar residues). Disordered stretches follow at residues 325–347 (SAPL…GLPS), 361–402 (RHSK…STIT), 415–544 (SIIP…PTYT), and 587–611 (SYVG…AYRH). The segment covering 361 to 373 (RHSKAHARKRKKR) has biased composition (basic residues). Composition is skewed to basic and acidic residues over residues 374–385 (VIDLRPHRKPTD) and 444–459 (TLRD…ERTN). Positions 520-529 (PLGPPAPAPI) are enriched in pro residues.

It belongs to the MDM34 family. Component of the ER-mitochondria encounter structure (ERMES) or MDM complex, composed of MMM1, MDM10, MDM12 and MDM34.

The protein localises to the mitochondrion outer membrane. Its function is as follows. Component of the ERMES/MDM complex, which serves as a molecular tether to connect the endoplasmic reticulum (ER) and mitochondria. Components of this complex are involved in the control of mitochondrial shape and protein biogenesis, and function in nonvesicular lipid trafficking between the ER and mitochondria. MDM34 is required for the interaction of the ER-resident membrane protein MMM1 and the outer mitochondrial membrane-resident beta-barrel protein MDM10. This chain is Mitochondrial distribution and morphology protein 34, found in Paracoccidioides brasiliensis (strain Pb18).